A 303-amino-acid chain; its full sequence is US1 protein (303 aa).

The interval I230–G284 is disordered. The span at A256–T268 shows a compositional bias: low complexity.

This sequence belongs to the herpesviridae US2 family.

This chain is US1 protein (US1), found in Equine herpesvirus 1 (strain Kentucky A) (EHV-1).